Here is a 278-residue protein sequence, read N- to C-terminus: 2-dehydro-3-deoxyphosphooctonate aldolase (278 aa).

Belongs to the KdsA family.

The protein resides in the cytoplasm. The enzyme catalyses D-arabinose 5-phosphate + phosphoenolpyruvate + H2O = 3-deoxy-alpha-D-manno-2-octulosonate-8-phosphate + phosphate. Its pathway is carbohydrate biosynthesis; 3-deoxy-D-manno-octulosonate biosynthesis; 3-deoxy-D-manno-octulosonate from D-ribulose 5-phosphate: step 2/3. The protein operates within bacterial outer membrane biogenesis; lipopolysaccharide biosynthesis. The sequence is that of 2-dehydro-3-deoxyphosphooctonate aldolase from Dechloromonas aromatica (strain RCB).